The chain runs to 862 residues: Probable inorganic carbon transporter subunit DabA (862 aa).

The Zn(2+) site is built by Cys-365, Asp-367, His-540, and Cys-555.

It belongs to the inorganic carbon transporter (TC 9.A.2) DabA family. In terms of assembly, forms a complex with DabB. Requires Zn(2+) as cofactor.

The protein resides in the cell inner membrane. Its function is as follows. Part of an energy-coupled inorganic carbon pump. The protein is Probable inorganic carbon transporter subunit DabA of Vibrio cholerae serotype O1 (strain ATCC 39315 / El Tor Inaba N16961).